Reading from the N-terminus, the 268-residue chain is Tryptophan synthase alpha chain (268 aa).

Residues Glu-49 and Asp-60 each act as proton acceptor in the active site.

It belongs to the TrpA family. In terms of assembly, tetramer of two alpha and two beta chains.

The enzyme catalyses (1S,2R)-1-C-(indol-3-yl)glycerol 3-phosphate + L-serine = D-glyceraldehyde 3-phosphate + L-tryptophan + H2O. It functions in the pathway amino-acid biosynthesis; L-tryptophan biosynthesis; L-tryptophan from chorismate: step 5/5. Its function is as follows. The alpha subunit is responsible for the aldol cleavage of indoleglycerol phosphate to indole and glyceraldehyde 3-phosphate. This Xanthomonas axonopodis pv. citri (strain 306) protein is Tryptophan synthase alpha chain.